The following is a 263-amino-acid chain: Flagellar L-ring protein (263 aa).

A signal peptide spans 1–15; that stretch reads MKRLLCLLLLTTLTG. A lipid anchor (N-palmitoyl cysteine) is attached at cysteine 16. A lipid anchor (S-diacylglycerol cysteine) is attached at cysteine 16. Residues 123–143 are disordered; that stretch reads KSADAELSKSNDSSMDPLQVG.

It belongs to the FlgH family. In terms of assembly, the basal body constitutes a major portion of the flagellar organelle and consists of four rings (L,P,S, and M) mounted on a central rod.

Its subcellular location is the cell outer membrane. The protein resides in the bacterial flagellum basal body. Its function is as follows. Assembles around the rod to form the L-ring and probably protects the motor/basal body from shearing forces during rotation. The polypeptide is Flagellar L-ring protein (Aliivibrio fischeri (strain ATCC 700601 / ES114) (Vibrio fischeri)).